Here is a 204-residue protein sequence, read N- to C-terminus: Urease accessory protein UreG (204 aa).

13–20 (GPVGSGKT) contributes to the GTP binding site.

The protein belongs to the SIMIBI class G3E GTPase family. UreG subfamily. Homodimer. UreD, UreF and UreG form a complex that acts as a GTP-hydrolysis-dependent molecular chaperone, activating the urease apoprotein by helping to assemble the nickel containing metallocenter of UreC. The UreE protein probably delivers the nickel.

It localises to the cytoplasm. Facilitates the functional incorporation of the urease nickel metallocenter. This process requires GTP hydrolysis, probably effectuated by UreG. The chain is Urease accessory protein UreG from Acinetobacter baylyi (strain ATCC 33305 / BD413 / ADP1).